Consider the following 342-residue polypeptide: GTPase Obg (342 aa).

The 159-residue stretch at 1–159 folds into the Obg domain; it reads MKFIDEAKIY…RWIRLELKLL (159 aa). One can recognise an OBG-type G domain in the interval 160 to 332; that stretch reads ADVGIIGLPN…LLYKIGEALK (173 aa). GTP-binding positions include 166 to 173, 191 to 195, 214 to 217, 284 to 287, and 313 to 315; these read GLPNVGKS, FTTLT, DIPG, NKTD, and SAA. 2 residues coordinate Mg(2+): S173 and T193.

This sequence belongs to the TRAFAC class OBG-HflX-like GTPase superfamily. OBG GTPase family. Monomer. Requires Mg(2+) as cofactor.

The protein localises to the cytoplasm. In terms of biological role, an essential GTPase which binds GTP, GDP and possibly (p)ppGpp with moderate affinity, with high nucleotide exchange rates and a fairly low GTP hydrolysis rate. Plays a role in control of the cell cycle, stress response, ribosome biogenesis and in those bacteria that undergo differentiation, in morphogenesis control. This Syntrophus aciditrophicus (strain SB) protein is GTPase Obg.